The following is a 379-amino-acid chain: MATEIAKHICCGIDCNNEADRLQCPKCLNDGVKSYFCGQECFRNSWNIHKHLHRPPNVEKREDGTYNPFPKFHFAGSLKPVYPLSPIRKVPPHIKRPDYAKTGVSRSEQIEGRSFKLKRLTPKEQEGMRKVCRLGREVLDAAAAAVRPGTTTDELDSIVHNACIERDCFPSTLNYYAFPKSVCTSVNEIICHGIPDQRPLEDGDIVNIDVSLYHNGFHGDLNETYYVGDKAKANPDLVCLVENTRIALDKAIAAVKPGVLFQEFGNIIEKHTNSITEKQISVVRTYCGHGINQLFHCSPSIPHYSHNKAPGIARPGMTFTIEPMLTLGPARDITWPDDWTSSTASGRCSAQFEHTLLVTETGCEVLTARLPNSPGGPLK.

The C6H2-type zinc-finger motif lies at 7–60; it reads KHICCGIDCNNEADRLQCPKCLNDGVKSYFCGQECFRNSWNIHKHLHRPPNVEK. Zn(2+) is bound by residues Cys-10, Cys-15, Cys-24, Cys-27, Cys-37, Cys-41, His-49, and His-53. His-192 is a binding site for a protein. Residues Asp-209, Asp-220, and His-289 each coordinate Zn(2+). His-296 contributes to the a protein binding site. 2 residues coordinate Zn(2+): Glu-322 and Glu-353. Position 373 is a phosphoserine (Ser-373).

This sequence belongs to the peptidase M24A family. Methionine aminopeptidase type 1 subfamily. In terms of assembly, associates with the 60S ribosomal subunit of the 80S translational complex. It depends on Zn(2+) as a cofactor. Co(2+) serves as cofactor. Requires Mn(2+) as cofactor. The cofactor is Fe(2+).

The protein localises to the cytoplasm. It localises to the nucleus. The protein resides in the nucleolus. It catalyses the reaction Release of N-terminal amino acids, preferentially methionine, from peptides and arylamides.. In terms of biological role, cotranslationally removes the N-terminal methionine from nascent proteins. The N-terminal methionine is often cleaved when the second residue in the primary sequence is small and uncharged (Met-Ala-, Cys, Gly, Pro, Ser, Thr, or Val). In Schizosaccharomyces pombe (strain 972 / ATCC 24843) (Fission yeast), this protein is Methionine aminopeptidase 1 (fma1).